Reading from the N-terminus, the 439-residue chain is Tubulin beta chain (439 aa).

Positions 11, 69, 138, 142, 143, 144, 204, and 226 each coordinate GTP. Glu69 serves as a coordination point for Mg(2+).

This sequence belongs to the tubulin family. In terms of assembly, dimer of alpha and beta chains. A typical microtubule is a hollow water-filled tube with an outer diameter of 25 nm and an inner diameter of 15 nM. Alpha-beta heterodimers associate head-to-tail to form protofilaments running lengthwise along the microtubule wall with the beta-tubulin subunit facing the microtubule plus end conferring a structural polarity. Microtubules usually have 13 protofilaments but different protofilament numbers can be found in some organisms and specialized cells. Mg(2+) serves as cofactor.

The protein localises to the cytoplasm. It localises to the cytoskeleton. Functionally, tubulin is the major constituent of microtubules, a cylinder consisting of laterally associated linear protofilaments composed of alpha- and beta-tubulin heterodimers. Microtubules grow by the addition of GTP-tubulin dimers to the microtubule end, where a stabilizing cap forms. Below the cap, tubulin dimers are in GDP-bound state, owing to GTPase activity of alpha-tubulin. The polypeptide is Tubulin beta chain (TUB2) (Encephalitozoon intestinalis (Microsporidian parasite)).